The primary structure comprises 375 residues: CLIP domain-containing serine protease B14 (375 aa).

The first 24 residues, 1 to 24 (MYSRRYVACGLLCLLVIAIDQGHG), serve as a signal peptide directing secretion. In terms of domain architecture, Clip spans 29-83 (PCTTPNGTAGRCVRVRECGYVLDLLRKDLFAHSDTVHLEGLQCGTRPDGGALVCC). 3 cysteine pairs are disulfide-bonded: cysteine 30-cysteine 82, cysteine 40-cysteine 71, and cysteine 46-cysteine 83. Asparagine 34 carries an N-linked (GlcNAc...) asparagine glycan. The Peptidase S1 domain maps to 101 to 370 (IIGGNDTELG…YMGWLEREMF (270 aa)). Asparagine 105 is a glycosylation site (N-linked (GlcNAc...) asparagine). Cysteine 131 and cysteine 147 form a disulfide bridge. Catalysis depends on charge relay system residues histidine 146 and aspartate 213. The N-linked (GlcNAc...) asparagine glycan is linked to asparagine 238. Disulfide bonds link cysteine 289/cysteine 307 and cysteine 317/cysteine 346. Serine 321 acts as the Charge relay system in catalysis. An N-linked (GlcNAc...) asparagine glycan is attached at asparagine 357.

Belongs to the peptidase S1 family. CLIP subfamily. Post-translationally, N-glycosylated. In terms of processing, proteolytically cleaved. In terms of tissue distribution, expressed by a subpopulation of hemocytes.

It is found in the secreted. Its function is as follows. Serine protease. Plays a role in innate immunity against infections by parasite P.berghei and by Gram-negative bacteria such as E.coli. In response to P.berghei infection, contributes to the clearing of parasite ookinetes independent of melanization, an innate immune response which consists in the deposition of melanin pigments on invading pathogens and parasites. May play a role in non-septic wound healing. The polypeptide is CLIP domain-containing serine protease B14 (Anopheles gambiae (African malaria mosquito)).